An 881-amino-acid chain; its full sequence is Envelope glycoprotein gp160 (881 aa).

The signal sequence occupies residues 1 to 19; the sequence is MGCLGNQLLIAILLLSVYG. Over 20-696 the chain is Extracellular; sequence IYCTQYVTVF…ASWIKYIQYG (677 aa). N-linked (GlcNAc...) asparagine; by host glycosylation occurs at asparagine 37. Cysteine 44 and cysteine 57 form a disulfide bridge. N-linked (GlcNAc...) asparagine; by host glycosylation is found at asparagine 70, asparagine 114, asparagine 148, asparagine 158, asparagine 186, asparagine 200, asparagine 204, asparagine 214, asparagine 246, asparagine 249, asparagine 280, asparagine 286, asparagine 297, asparagine 308, asparagine 318, asparagine 373, and asparagine 379. 5 cysteine pairs are disulfide-bonded: cysteine 101–cysteine 222, cysteine 108–cysteine 213, cysteine 113–cysteine 170, cysteine 235–cysteine 265, and cysteine 245–cysteine 257. The tract at residues 113 to 169 is V1; that stretch reads CNKSETDRWGLTKSSTTITTAAPTSAPVSEKIDMVNETSSCIAQNNCTGLEQEQMIS. Positions 170–213 are V2; sequence CKFTMTGLKRDKTKEYNETWYSTDLVCEQGNSTDNESRCYMNHC. The segment at 313 to 345 is V3; sequence CRRPGNKTVLPVTIMSGLVFHSQPINDRPKQAW. The cysteines at positions 313 and 346 are disulfide-linked. 2 disulfides stabilise this stretch: cysteine 397–cysteine 461 and cysteine 404–cysteine 434. The tract at residues 404–434 is V4; that stretch reads CKMNWFLNWVEDRDVTTQRPKERHRRNYVPC. 2 N-linked (GlcNAc...) asparagine; by host glycosylation sites follow: asparagine 462 and asparagine 478. A V5 region spans residues 477-484; sequence GNQTSITM. The fusion peptide stretch occupies residues 528–548; the sequence is GVFVLGFLGFLATAGSAMGAA. The interval 591–607 is immunosuppression; the sequence is LQTRVTAIEKYLKDQAQ. Asparagine 627, asparagine 636, and asparagine 652 each carry an N-linked (GlcNAc...) asparagine; by host glycan. A coiled-coil region spans residues 636-668; that stretch reads NDTWQEWERKVDFLEENITALLEEAQIQQEKNM. Residues 673–694 are MPER; binding to GalCer; that stretch reads KLNSWDVFGNWFDLASWIKYIQ. Residues 697–717 form a helical membrane-spanning segment; sequence IYVVVGVILLRIVIYIVQMLA. Topologically, residues 718-881 are cytoplasmic; the sequence is KLRQGYRPVF…IRQGLELTLL (164 aa). The short motif at 723–726 is the YXXV motif; contains endocytosis signal element; sequence YRPV. A disordered region spans residues 737–761; that stretch reads THTQQDPALPTREGKEGDGGEGGGN. Cysteine 789 carries S-palmitoyl cysteine; by host lipidation. Positions 880–881 match the Di-leucine internalization motif motif; it reads LL.

As to quaternary structure, the mature envelope protein (Env) consists of a homotrimer of non-covalently associated gp120-gp41 heterodimers. The resulting complex protrudes from the virus surface as a spike. Interacts with host CD4 and CCR5. Gp120 also interacts with the C-type lectins CD209/DC-SIGN and CLEC4M/DC-SIGNR (collectively referred to as DC-SIGN(R)). The mature envelope protein (Env) consists of a homotrimer of non-covalently associated gp120-gp41 heterodimers. The resulting complex protrudes from the virus surface as a spike. Specific enzymatic cleavages in vivo yield mature proteins. Envelope glycoproteins are synthesized as an inactive precursor that is heavily N-glycosylated and processed likely by host cell furin in the Golgi to yield the mature SU and TM proteins. The cleavage site between SU and TM requires the minimal sequence [KR]-X-[KR]-R. In terms of processing, palmitoylation of the transmembrane protein and of Env polyprotein (prior to its proteolytic cleavage) is essential for their association with host cell membrane lipid rafts. Palmitoylation is therefore required for envelope trafficking to classical lipid rafts, but not for viral replication.

The protein resides in the virion membrane. It is found in the host cell membrane. The protein localises to the host endosome membrane. Functionally, the surface protein gp120 (SU) attaches the virus to the host lymphoid cell by binding to the primary receptor CD4. This interaction induces a structural rearrangement creating a high affinity binding site for a chemokine coreceptor like CCR5. This peculiar 2 stage receptor-interaction strategy allows gp120 to maintain the highly conserved coreceptor-binding site in a cryptic conformation, protected from neutralizing antibodies. These changes are transmitted to the transmembrane protein gp41 and are thought to activate its fusogenic potential by unmasking its fusion peptide. Surface protein gp120 (SU) may target the virus to gut-associated lymphoid tissue (GALT) by binding host ITGA4/ITGB7 (alpha-4/beta-7 integrins), a complex that mediates T-cell migration to the GALT. Interaction between gp120 and ITGA4/ITGB7 would allow the virus to enter GALT early in the infection, infecting and killing most of GALT's resting CD4+ T-cells. This T-cell depletion is believed to be the major insult to the host immune system leading to AIDS. In terms of biological role, the surface protein gp120 is a ligand for CD209/DC-SIGN and CLEC4M/DC-SIGNR, which are respectively found on dendritic cells (DCs), and on endothelial cells of liver sinusoids and lymph node sinuses. These interactions allow capture of viral particles at mucosal surfaces by these cells and subsequent transmission to permissive cells. DCs are professional antigen presenting cells, critical for host immunity by inducing specific immune responses against a broad variety of pathogens. They act as sentinels in various tissues where they take up antigen, process it, and present it to T-cells following migration to lymphoid organs. SIV subverts the migration properties of dendritic cells to gain access to CD4+ T-cells in lymph nodes. Virus transmission to permissive T-cells occurs either in trans (without DCs infection, through viral capture and transmission), or in cis (following DCs productive infection, through the usual CD4-gp120 interaction), thereby inducing a robust infection. In trans infection, bound virions remain infectious over days and it is proposed that they are not degraded, but protected in non-lysosomal acidic organelles within the DCs close to the cell membrane thus contributing to the viral infectious potential during DCs' migration from the periphery to the lymphoid tissues. On arrival at lymphoid tissues, intact virions recycle back to DCs' cell surface allowing virus transmission to CD4+ T-cells. Virion capture also seems to lead to MHC-II-restricted viral antigen presentation, and probably to the activation of SIV-specific CD4+ cells. Its function is as follows. The transmembrane protein gp41 (TM) acts as a class I viral fusion protein. Under the current model, the protein has at least 3 conformational states: pre-fusion native state, pre-hairpin intermediate state, and post-fusion hairpin state. During fusion of viral and target intracellular membranes, the coiled coil regions (heptad repeats) assume a trimer-of-hairpins structure, positioning the fusion peptide in close proximity to the C-terminal region of the ectodomain. The formation of this structure appears to drive apposition and subsequent fusion of viral and target cell membranes. Complete fusion occurs in host cell endosomes. The virus undergoes clathrin-dependent internalization long before endosomal fusion, thus minimizing the surface exposure of conserved viral epitopes during fusion and reducing the efficacy of inhibitors targeting these epitopes. Membranes fusion leads to delivery of the nucleocapsid into the cytoplasm. Functionally, the envelope glycoprotein gp160 precursor down-modulates cell surface CD4 antigen by interacting with it in the endoplasmic reticulum and blocking its transport to the cell surface. The gp120-gp41 heterodimer allows rapid transcytosis of the virus through CD4 negative cells such as simple epithelial monolayers of the intestinal, rectal and endocervical epithelial barriers. Both gp120 and gp41 specifically recognize glycosphingolipids galactosyl-ceramide (GalCer) or 3' sulfo-galactosyl-ceramide (GalS) present in the lipid rafts structures of epithelial cells. Binding to these alternative receptors allows the rapid transcytosis of the virus through the epithelial cells. This transcytotic vesicle-mediated transport of virions from the apical side to the basolateral side of the epithelial cells does not involve infection of the cells themselves. This Cercopithecidae (Old World monkeys) protein is Envelope glycoprotein gp160 (env).